A 455-amino-acid chain; its full sequence is Exodeoxyribonuclease 7 large subunit (455 aa).

Belongs to the XseA family. Heterooligomer composed of large and small subunits.

It localises to the cytoplasm. The enzyme catalyses Exonucleolytic cleavage in either 5'- to 3'- or 3'- to 5'-direction to yield nucleoside 5'-phosphates.. In terms of biological role, bidirectionally degrades single-stranded DNA into large acid-insoluble oligonucleotides, which are then degraded further into small acid-soluble oligonucleotides. The polypeptide is Exodeoxyribonuclease 7 large subunit (Escherichia coli O7:K1 (strain IAI39 / ExPEC)).